A 901-amino-acid polypeptide reads, in one-letter code: HTH-type transcriptional regulator MalT (901 aa).

39-46 (SPAGYGKT) contacts ATP. The HTH luxR-type domain maps to 829-894 (ELIRTSPLTQ…DAVQHAQQLL (66 aa)). Residues 853-872 (NDQIAGELDVAATTIKTHIR) constitute a DNA-binding region (H-T-H motif).

It belongs to the MalT family. Monomer in solution. Oligomerizes to an active state in the presence of the positive effectors ATP and maltotriose.

Activated by ATP and maltotriose, which are both required for DNA binding. Positively regulates the transcription of the maltose regulon whose gene products are responsible for uptake and catabolism of malto-oligosaccharides. Specifically binds to the promoter region of its target genes, recognizing a short DNA motif called the MalT box. The polypeptide is HTH-type transcriptional regulator MalT (Cronobacter sakazakii (strain ATCC BAA-894) (Enterobacter sakazakii)).